Consider the following 2437-residue polypeptide: Neurogenic locus notch homolog protein 1 (2437 aa).

A signal peptide spans 1–20 (MNRFLVKLTLLTAASLATVA). 4 consecutive EGF-like domains span residues 21–57 (QGQR…AQCQ), 58–98 (FPNP…RLCL), 101–138 (VNHA…KTCQ), and 139–175 (LADP…QTCR). Topologically, residues 21 to 1726 (QGQRCSEYCQ…GGPPKTGEMY (1706 aa)) are extracellular. 111 disulfide bridges follow: C25/C35, C29/C45, C47/C56, C62/C73, C67/C86, C88/C97, C105/C116, C110/C126, C128/C137, C143/C154, C148/C163, C165/C174, C181/C194, C188/C203, C205/C214, C221/C232, C226/C242, C244/C253, C260/C271, C265/C280, C282/C291, C298/C311, C305/C320, C322/C331, C338/C349, C343/C358, C360/C369, C375/C386, C380/C397, C399/C408, C415/C428, C422/C437, C439/C448, C455/C466, C460/C475, C477/C486, C493/C503, C498/C512, C514/C523, C530/C541, C535/C550, C552/C561, C568/C578, C573/C587, C589/C598, C605/C616, C610/C625, C627/C636, C643/C653, C648/C662, C664/C673, C680/C691, C685/C700, C702/C711, C718/C728, C723/C737, C739/C748, C755/C766, C760/C775, C777/C786, C793/C804, C798/C813, C815/C824, C831/C842, C836/C853, C855/C864, C871/C882, C876/C891, C893/C902, C909/C920, C914/C929, C931/C940, C947/C958, C952/C967, C969/C978, C985/C996, C990/C1005, C1007/C1016, C1023/C1034, C1028/C1043, C1045/C1054, C1061/C1072, C1066/C1081, C1083/C1092, C1099/C1120, C1114/C1129, C1131/C1140, C1147/C1158, C1152/C1167, C1169/C1178, C1185/C1196, C1190/C1205, C1207/C1216, C1223/C1242, C1236/C1251, C1253/C1262, C1269/C1282, C1274/C1291, C1293/C1302, C1309/C1320, C1314/C1332, C1334/C1343, C1350/C1361, C1355/C1370, C1372/C1381, C1389/C1400, C1394/C1411, C1413/C1422, C1447/C1470, C1452/C1465, and C1461/C1477. The 39-residue stretch at 177-215 (DVNECAVSPSPCRNGGTCINEVGSYLCRCPPEYTGPHCQ) folds into the EGF-like 5; calcium-binding domain. Residues 217–254 (LYQPCLPSPCRSGGTCVQTSDTTHTCSCLPGFTGQTCE) form the EGF-like 6 domain. A glycan (O-linked (Fuc...) threonine; alternate) is linked at T231. An O-linked (GalNAc...) threonine; alternate glycan is attached at T231. The EGF-like 7; calcium-binding domain maps to 256 to 292 (NVDDCTQHACENGGPCIDGINTYNCHCDKHWTGQYCT). The EGF-like 8; calcium-binding domain maps to 294 to 332 (DVDECELSPNACQNGGTCHNTIGGFHCVCVNGWTGDDCS). The region spanning 334–370 (NIDDCASAACSHGATCHDRVASFFCECPHGRTGLLCH) is the EGF-like 9; calcium-binding domain. In terms of domain architecture, EGF-like 10 spans 371-409 (LDDACISNPCQKGSNCDTNPVSGKAICTCPPGYTGSACN). The 39-residue stretch at 411-449 (DIDECSLGANPCEHGGRCLNTKGSFQCKCLQGYEGPRCE) folds into the EGF-like 11; calcium-binding domain. Residues 451 to 487 (DVNECKSNPCQNDATCLDQIGGFHCICMPGYEGVFCQ) enclose the EGF-like 12; calcium-binding domain. Residues 489-524 (NSDDCASQPCLNGKCIDKINSFHCECPKGFSGSLCQ) form the EGF-like 13; calcium-binding domain. Positions 526-562 (DVDECASTPCKNGAKCTDGPNKYTCECTPGFSGIHCE) constitute an EGF-like 14; calcium-binding domain. One can recognise an EGF-like 15; calcium-binding domain in the interval 564–599 (DINECASSPCHYGVCRDGVASFTCDCRPGYTGRLCE). Positions 601 to 637 (NINECLSQPCRNGGTCQDRENAYICTCPKGTTGVNCE) constitute an EGF-like 16; calcium-binding domain. Residues 639-674 (NIDDCKRKPCDYGKCIDKINGYECVCEPGYSGSMCN) form the EGF-like 17; calcium-binding domain. One can recognise an EGF-like 18; calcium-binding domain in the interval 676–712 (NIDDCALNPCHNGGTCIDGVNSFTCLCPDGFRDATCL). In terms of domain architecture, EGF-like 19; calcium-binding spans 714-749 (QHNECSSNPCIHGSCLDQINSYRCVCEAGWMGRNCD). In terms of domain architecture, EGF-like 20; calcium-binding spans 751-787 (NINECLSNPCVNGGTCKDMTSGYLCTCRAGFSGPNCQ). Positions 789–825 (NINECASNPCLNQGSCIDDVAGFKCNCMLPYTGEVCE) constitute an EGF-like 21; calcium-binding domain. The region spanning 827–865 (VLAPCSPRPCKNGGVCRESEDFQSFSCNCPAGWQGQTCE) is the EGF-like 22 domain. Residues 867–903 (DINECVRNPCTNGGVCENLRGGFQCRCNPGFTGALCE) form the EGF-like 23; calcium-binding domain. Positions 905 to 941 (DIDDCEPNPCSNGGVCQDRVNGFVCVCLAGFRGERCA) constitute an EGF-like 24; calcium-binding domain. Positions 943 to 979 (DIDECVSAPCRNGGNCTDCVNSYTCSCPAGFSGINCE) constitute an EGF-like 25; calcium-binding domain. N-linked (GlcNAc...) asparagine glycosylation is present at N957. The region spanning 981 to 1017 (NTPDCTESSCFNGGTCVDGISSFSCVCLPGFTGNYCQ) is the EGF-like 26 domain. The 37-residue stretch at 1019–1055 (DVNECDSRPCQNGGSCQDGYGTYKCTCPHGYTGLNCQ) folds into the EGF-like 27; calcium-binding domain. EGF-like domains lie at 1057–1093 (LVRW…IYCD) and 1095–1141 (PSVS…SYCQ). Positions 1143 to 1179 (QVDECQPNPCQNGATCTDYLGGYSCECVPGYHGMNCS) constitute an EGF-like 30; calcium-binding domain. A glycan (N-linked (GlcNAc...) asparagine) is linked at N1177. The EGF-like 31; calcium-binding domain maps to 1181 to 1217 (EINECLSQPCQNGGTCIDLVNTYKCSCPRGTQGVHCE). Residues 1219–1263 (DIDDCSPSVDPLTGEPRCFNGGRCVDRVGGYGCVCPAGFVGERCE) form the EGF-like 32; calcium-binding domain. EGF-like domains follow at residues 1265–1303 (DVNE…KRCE), 1305–1344 (VFNG…SSCE), 1346–1382 (DSQS…HECQ), and 1385–1423 (MDSP…LLCH). An O-linked (Fuc...) threonine; alternate glycan is attached at T1399. Residue T1399 is glycosylated (O-linked (GalNAc...) threonine; alternate). LNR repeat units lie at residues 1447 to 1487 (CEIA…PWQN), 1488 to 1525 (CSAA…LEGQ), and 1526 to 1566 (CNPL…VPQK). N-linked (GlcNAc...) asparagine glycosylation is present at N1487. 6 cysteine pairs are disulfide-bonded: C1488–C1512, C1494–C1507, C1503–C1519, C1526–C1552, C1534–C1547, and C1543–C1559. N1585 carries N-linked (GlcNAc...) asparagine glycosylation. The helical transmembrane segment at 1727–1747 (PMFLVLLALAVLALAAVGVVV) threads the bilayer. Residues 1748 to 2437 (SRKRKREHGQ…QMNHIPEAFK (690 aa)) are Cytoplasmic-facing. Residues 1770-1790 (KKKRREPVGEDSVGLKPLKNS) form a disordered region. ANK repeat units lie at residues 1867–1910 (DGFT…NLHN), 1915–1944 (TGET…DANV), 1948–1978 (MGRT…DLDA), 1982–2011 (DGTT…DPNA), 2015–2044 (SGKS…NKDL), and 2048–2077 (KEET…NRDI). Disordered stretches follow at residues 2127 to 2174 (IKPS…GGIM) and 2356 to 2437 (RMAP…EAFK). Polar residues predominate over residues 2356 to 2387 (RMAPPISSTQFLTPPSQHSYSNPMDNTPNHQQ). A compositionally biased stretch (low complexity) spans 2396–2411 (PSAGSPDQWSSSSPHS). Residues 2412–2429 (NLSDWSEGISSPPTSMQM) are compositionally biased toward polar residues.

It belongs to the NOTCH family. Post-translationally, synthesized in the endoplasmic reticulum as an inactive form which is proteolytically cleaved by a furin-like convertase in the trans-Golgi network before it reaches the plasma membrane to yield an active, ligand-accessible form. Cleavage results in a C-terminal fragment N(TM) and a N-terminal fragment N(EC). Following ligand binding, it is cleaved by adam17 to yield a membrane-associated intermediate fragment called notch extracellular truncation (NEXT). Following endocytosis, this fragment is then cleaved by presenilin dependent gamma-secretase to release a Notch-derived peptide containing the intracellular domain (NICD) from the membrane. In terms of processing, O-glycosylated on the EGF-like domains. Contains both O-linked fucose and O-linked glucose. O-linked glycosylation by galnt11 is involved in determination of left/right symmetry: glycosylation promotes activation of notch1, possibly by promoting cleavage by adam17, modulating the balance between motile and immotile (sensory) cilia at the left-right organiser (LRO).

It localises to the cell membrane. It is found in the nucleus. Functions as a receptor for membrane-bound ligands Jagged-1 (JAG1), Jagged-2 (JAG2) and Delta-1 (DLL1) to regulate cell-fate determination. Upon ligand activation through the released notch intracellular domain (NICD) it forms a transcriptional activator complex with RBPJ/RBPSUH and activates genes of the enhancer of split locus. Affects the implementation of differentiation, proliferation and apoptotic programs. Involved in angiogenesis; negatively regulates endothelial cell proliferation and migration and angiogenic sprouting. Involved in the maturation of both CD4(+) and CD8(+) cells in the thymus. Important for follicular differentiation and possibly cell fate selection within the follicle. During cerebellar development, functions as a receptor for neuronal DNER and is involved in the differentiation of Bergmann glia. Represses neuronal and myogenic differentiation. May play an essential role in postimplantation development, probably in some aspect of cell specification and/or differentiation. May be involved in mesoderm development, somite formation and neurogenesis. Involved in determination of left/right symmetry by modulating the balance between motile and immotile (sensory) cilia at the left-right organiser (LRO). This chain is Neurogenic locus notch homolog protein 1 (notch1a), found in Danio rerio (Zebrafish).